The sequence spans 505 residues: Glucose-6-phosphate 1-dehydrogenase (505 aa).

Position 2 is an N-acetylserine (serine 2). Residues 18-25 (GASGDLAK) and arginine 52 each bind NADP(+). Serine 142 is modified (phosphoserine). Tyrosine 145 bears the Phosphotyrosine mark. Residue lysine 157 participates in NADP(+) binding. D-glucose 6-phosphate is bound by residues lysine 157, 187–191 (HYLGK), glutamate 225, and aspartate 244. Histidine 249 functions as the Proton acceptor in the catalytic mechanism. Residue arginine 340 coordinates NADP(+). Lysine 343 provides a ligand contact to D-glucose 6-phosphate. Residues lysine 349, arginine 353, and arginine 375 each coordinate NADP(+). Glutamine 377 is a binding site for D-glucose 6-phosphate. Residues 383 to 385 (YLK) and arginine 470 each bind NADP(+).

Belongs to the glucose-6-phosphate dehydrogenase family.

It catalyses the reaction D-glucose 6-phosphate + NADP(+) = 6-phospho-D-glucono-1,5-lactone + NADPH + H(+). It functions in the pathway carbohydrate degradation; pentose phosphate pathway; D-ribulose 5-phosphate from D-glucose 6-phosphate (oxidative stage): step 1/3. Functionally, catalyzes the rate-limiting step of the oxidative pentose-phosphate pathway, which represents a route for the dissimilation of carbohydrates besides glycolysis. The main function of this enzyme is to provide reducing power (NADPH) and pentose phosphates for fatty acid and nucleic acid synthesis. The chain is Glucose-6-phosphate 1-dehydrogenase (ZWF1) from Saccharomyces cerevisiae (strain ATCC 204508 / S288c) (Baker's yeast).